Here is a 340-residue protein sequence, read N- to C-terminus: Protein S-acyltransferase 10 (340 aa).

The next 2 membrane-spanning stretches (helical) occupy residues 34 to 54 and 66 to 86; these read LLLKLALVALHLVFIGFLFLF and PWYMGCYILLFSATLLQYFVT. Residues 162–212 form the DHHC domain; that stretch reads LTCGYCHVEQPPRTKHCHDCDRCVLQFDHHCVWLGTCIGQKNHSKFWWYIC. Cys192 (S-palmitoyl cysteine intermediate) is an active-site residue. Helical transmembrane passes span 207–227 and 241–261; these read FWWYICEETTLCIWTLIMYVD and IIILLLVILAISLIFVLLLLI.

This sequence belongs to the DHHC palmitoyltransferase family. Expressed in mature embryos, embryo sacs, cotyledons, whole seedlings, hydathodes, guard cells, sites of lateral root initiation, root tips and phloem, but not in xylem.

The protein resides in the vacuole membrane. It catalyses the reaction L-cysteinyl-[protein] + hexadecanoyl-CoA = S-hexadecanoyl-L-cysteinyl-[protein] + CoA. Its function is as follows. S-acyltransferase involved in protein lipid modification. Catalyzes the palmitoylation of proteins peripheral or integral to the tonoplast. Required for the tonoplast localization of CBL2, CBL3 and CBL6, but not for the plasma membrane localization of CBL9, for the endosome localization of RABF1 or for the endomembrane localization of RABF2B. This Arabidopsis thaliana (Mouse-ear cress) protein is Protein S-acyltransferase 10 (PAT10).